The sequence spans 72 residues: Conotoxin VnMKLT2-021 (72 aa).

An N-terminal signal peptide occupies residues 1-22 (MKLTCVLIVAVLFLTACQLTTA). Residues 23-45 (ASYARSERQHPDLGSSDQNSKLT) constitute a propeptide that is removed on maturation. 3 disulfides stabilise this stretch: C48–C62, C55–C66, and C61–C71.

This sequence belongs to the conotoxin O1 superfamily. As to expression, expressed by the venom duct.

It localises to the secreted. The sequence is that of Conotoxin VnMKLT2-021 from Conus ventricosus (Mediterranean cone).